A 454-amino-acid polypeptide reads, in one-letter code: tRNA-2-methylthio-N(6)-dimethylallyladenosine synthase (454 aa).

The 117-residue stretch at 6-122 (RRYHITTFGC…LKDLLESVFA (117 aa)) folds into the MTTase N-terminal domain. Residues C15, C51, C85, C157, C161, and C164 each coordinate [4Fe-4S] cluster. One can recognise a Radical SAM core domain in the interval 143 to 380 (RDSTVTAWVN…NHLVNVKAAE (238 aa)). The region spanning 383-447 (QRYMGRIEEV…AFSLTGEPIE (65 aa)) is the TRAM domain.

The protein belongs to the methylthiotransferase family. MiaB subfamily. Monomer. [4Fe-4S] cluster is required as a cofactor.

The protein resides in the cytoplasm. It carries out the reaction N(6)-dimethylallyladenosine(37) in tRNA + (sulfur carrier)-SH + AH2 + 2 S-adenosyl-L-methionine = 2-methylsulfanyl-N(6)-dimethylallyladenosine(37) in tRNA + (sulfur carrier)-H + 5'-deoxyadenosine + L-methionine + A + S-adenosyl-L-homocysteine + 2 H(+). Functionally, catalyzes the methylthiolation of N6-(dimethylallyl)adenosine (i(6)A), leading to the formation of 2-methylthio-N6-(dimethylallyl)adenosine (ms(2)i(6)A) at position 37 in tRNAs that read codons beginning with uridine. The polypeptide is tRNA-2-methylthio-N(6)-dimethylallyladenosine synthase (Nostoc sp. (strain PCC 7120 / SAG 25.82 / UTEX 2576)).